We begin with the raw amino-acid sequence, 375 residues long: Glutaconyl-CoA decarboxylase subunit beta (375 aa).

11 consecutive transmembrane segments (helical) span residues 16–39 (GFVA…YLAI), 46–65 (LLLS…RTGF), 74–96 (LILG…GAMT), 107–130 (TLLL…LLGF), 137–153 (AIGI…IYLA), 160–178 (LLGA…VPLI), 208–232 (VVFP…IGML), 254–271 (ALMN…GLTM), 284–302 (IICL…GVLF), 316–332 (PLIG…AARV), and 345–369 (FLLM…GTML).

It belongs to the GcdB/MmdB/OadB family. Heterooctamer consisting of two alpha, two beta, two gamma and two delta subunits. Post-translationally, the N-terminus is blocked.

It is found in the cell membrane. It catalyses the reaction (2E)-glutaconyl-CoA + Na(+)(in) + H(+) = (2E)-butenoyl-CoA + Na(+)(out) + CO2. Its pathway is amino-acid degradation; L-glutamate degradation via hydroxyglutarate pathway; crotonoyl-CoA from L-glutamate: step 5/5. Functionally, tunnel subunit of the primary sodium pump glutaconyl-CoA decarboxylase (GCD). This chain is Glutaconyl-CoA decarboxylase subunit beta (gcdB), found in Acidaminococcus fermentans (strain ATCC 25085 / DSM 20731 / CCUG 9996 / CIP 106432 / VR4).